The chain runs to 692 residues: Elongation factor G (692 aa).

Residues 8 to 282 enclose the tr-type G domain; that stretch reads KDTRNIGIMA…AVLDYLPSPL (275 aa). GTP is bound by residues 17–24, 81–85, and 135–138; these read AHIDAGKT, DTPGH, and NKMD.

This sequence belongs to the TRAFAC class translation factor GTPase superfamily. Classic translation factor GTPase family. EF-G/EF-2 subfamily.

The protein localises to the cytoplasm. Catalyzes the GTP-dependent ribosomal translocation step during translation elongation. During this step, the ribosome changes from the pre-translocational (PRE) to the post-translocational (POST) state as the newly formed A-site-bound peptidyl-tRNA and P-site-bound deacylated tRNA move to the P and E sites, respectively. Catalyzes the coordinated movement of the two tRNA molecules, the mRNA and conformational changes in the ribosome. The protein is Elongation factor G of Shouchella clausii (strain KSM-K16) (Alkalihalobacillus clausii).